A 365-amino-acid chain; its full sequence is S-adenosylmethionine decarboxylase proenzyme (365 aa).

Catalysis depends on residues Glu31 and Glu34. Catalysis depends on Ser87, which acts as the Schiff-base intermediate with substrate; via pyruvic acid. Ser87 carries the post-translational modification Pyruvic acid (Ser); by autocatalysis. The active-site Proton donor; for catalytic activity is Cys101. Residues Ser248 and His263 each act as proton acceptor; for processing activity in the active site.

It belongs to the eukaryotic AdoMetDC family. As to quaternary structure, heterotetramer of two alpha and two beta chains. The cofactor is pyruvate. In terms of processing, is synthesized initially as an inactive proenzyme. Formation of the active enzyme involves a self-maturation process in which the active site pyruvoyl group is generated from an internal serine residue via an autocatalytic post-translational modification. Two non-identical subunits are generated from the proenzyme in this reaction, and the pyruvate is formed at the N-terminus of the alpha chain, which is derived from the carboxyl end of the proenzyme. The post-translation cleavage follows an unusual pathway, termed non-hydrolytic serinolysis, in which the side chain hydroxyl group of the serine supplies its oxygen atom to form the C-terminus of the beta chain, while the remainder of the serine residue undergoes an oxidative deamination to produce ammonia and the pyruvoyl group blocking the N-terminus of the alpha chain.

It carries out the reaction S-adenosyl-L-methionine + H(+) = S-adenosyl 3-(methylsulfanyl)propylamine + CO2. It functions in the pathway amine and polyamine biosynthesis; S-adenosylmethioninamine biosynthesis; S-adenosylmethioninamine from S-adenosyl-L-methionine: step 1/1. This chain is S-adenosylmethionine decarboxylase proenzyme (smd-1), found in Onchocerca volvulus.